A 359-amino-acid polypeptide reads, in one-letter code: Glutamate 5-kinase (359 aa).

Lys7 is an ATP binding site. Substrate contacts are provided by Ser47, Asp135, and Asn147. Residue 202–208 (SGGITSK) participates in ATP binding. Residues 266–343 (KGSIFINEGA…DQLEDVLGYS (78 aa)) form the PUA domain.

Belongs to the glutamate 5-kinase family.

It is found in the cytoplasm. It carries out the reaction L-glutamate + ATP = L-glutamyl 5-phosphate + ADP. It functions in the pathway amino-acid biosynthesis; L-proline biosynthesis; L-glutamate 5-semialdehyde from L-glutamate: step 1/2. In terms of biological role, catalyzes the transfer of a phosphate group to glutamate to form L-glutamate 5-phosphate. The sequence is that of Glutamate 5-kinase from Kosmotoga olearia (strain ATCC BAA-1733 / DSM 21960 / TBF 19.5.1).